Reading from the N-terminus, the 105-residue chain is UPF0060 membrane protein Reut_B3679 (105 aa).

The next 4 helical transmembrane spans lie at 4 to 24, 28 to 48, 60 to 80, and 82 to 102; these read IALY…PYLW, GASA…AWLL, AAYG…VDGV, and PSAW…IIVF.

This sequence belongs to the UPF0060 family.

The protein localises to the cell inner membrane. The sequence is that of UPF0060 membrane protein Reut_B3679 from Cupriavidus pinatubonensis (strain JMP 134 / LMG 1197) (Cupriavidus necator (strain JMP 134)).